The chain runs to 467 residues: Cell division protein FtsP (467 aa).

The tat-type signal signal peptide spans 1-28 (MRSLTRRDFLKSGILASSLSCIPQSVMA).

This sequence belongs to the FtsP family. Predicted to be exported by the Tat system. The position of the signal peptide cleavage has not been experimentally proven.

Its subcellular location is the periplasm. Cell division protein that is required for growth during stress conditions. May be involved in protecting or stabilizing the divisomal assembly under conditions of stress. The protein is Cell division protein FtsP of Histophilus somni (strain 2336) (Haemophilus somnus).